Consider the following 177-residue polypeptide: ATP synthase subunit delta (177 aa).

This sequence belongs to the ATPase delta chain family. F-type ATPases have 2 components, F(1) - the catalytic core - and F(0) - the membrane proton channel. F(1) has five subunits: alpha(3), beta(3), gamma(1), delta(1), epsilon(1). F(0) has three main subunits: a(1), b(2) and c(10-14). The alpha and beta chains form an alternating ring which encloses part of the gamma chain. F(1) is attached to F(0) by a central stalk formed by the gamma and epsilon chains, while a peripheral stalk is formed by the delta and b chains.

It localises to the cell inner membrane. Its function is as follows. F(1)F(0) ATP synthase produces ATP from ADP in the presence of a proton or sodium gradient. F-type ATPases consist of two structural domains, F(1) containing the extramembraneous catalytic core and F(0) containing the membrane proton channel, linked together by a central stalk and a peripheral stalk. During catalysis, ATP synthesis in the catalytic domain of F(1) is coupled via a rotary mechanism of the central stalk subunits to proton translocation. Functionally, this protein is part of the stalk that links CF(0) to CF(1). It either transmits conformational changes from CF(0) to CF(1) or is implicated in proton conduction. In Shigella flexneri, this protein is ATP synthase subunit delta.